A 446-amino-acid polypeptide reads, in one-letter code: Endoplasmic reticulum membrane adapter protein XK (446 aa).

The Cytoplasmic portion of the chain corresponds to 1-2 (MK). A helical membrane pass occupies residues 3-23 (FPASVIASVFLFVAETAAALY). The Extracellular portion of the chain corresponds to 24–37 (LSSTYRSAGDRMWQ). The helical transmembrane segment at 38–58 (VLTLLFSLMPCALVQFTLLFV) threads the bilayer. At 59–68 (HRDLSRDRPL) the chain is on the cytoplasmic side. Residues 69–89 (ALLMHLLQLGPLYRCCEVFCI) form a helical membrane-spanning segment. Over 90–140 (YCQSDQNEEPYVSITKKRQMPKDGLSEEVEKEVGQAEGKLITHRSAFSRAS) the chain is Extracellular. Residue serine 115 is modified to Phosphoserine. A helical transmembrane segment spans residues 141-161 (VIQAFLGSAPQLTLQLYITVL). Residues 162–171 (EQNITTGRCF) are Cytoplasmic-facing. The chain crosses the membrane as a helical span at residues 172–192 (IMTLSLLSIVYGALRCNILAI). Residues 193–208 (KIKYDEYEVKVKPLAY) lie on the Extracellular side of the membrane. Residues 209 to 229 (VCIFLWRSFEIATRVIVLVLF) form a helical membrane-spanning segment. The Cytoplasmic segment spans residues 230 to 235 (TSVLKI). A helical membrane pass occupies residues 236-256 (WVVAVILVNFFSFFLYPWIVF). Residues 257-277 (WCSGSPFPENIEKALSRVGTT) lie on the Extracellular side of the membrane. Residues 278 to 298 (IVLCFLTLLYAGINMFCWSAV) traverse the membrane as a helical segment. The Cytoplasmic segment spans residues 299–317 (QLKIDNPELISKSQNWYRL). Residues 318–338 (LIYYMTRFIENSVLLLLWYFF) form a helical membrane-spanning segment. Topologically, residues 339–349 (KTDIYMYVCAP) are extracellular. The chain crosses the membrane as a helical span at residues 350-370 (LLILQLLIGYCTGILFMLVFY). Topologically, residues 371–446 (QFFHPCKKLF…IWTAVDLCSA (76 aa)) are cytoplasmic.

Belongs to the XK family. In terms of assembly, heterodimer with Kell; disulfide-linked. Interacts with VPS13A.

It localises to the endoplasmic reticulum membrane. Recruits the lipid transfer protein VPS13A from lipid droplets to the endoplasmic reticulum (ER) membrane. The protein is Endoplasmic reticulum membrane adapter protein XK of Mus musculus (Mouse).